A 3365-amino-acid polypeptide reads, in one-letter code: Probable serine/threonine-protein kinase roco9 (3365 aa).

Disordered stretches follow at residues Met1 to Lys177, Glu397 to Gln497, Pro944 to Ser985, Ile1044 to Ile1098, and Gln1261 to Gly1301. Over residues Phe8–Lys27 the composition is skewed to basic and acidic residues. Low complexity-rich tracts occupy residues Leu51–Thr84, Ser100–Ser116, Ser137–Thr169, and Glu397–Pro415. Positions Thr243–Asn437 constitute a Rho-GAP domain. Polar residues predominate over residues Pro421–Ser434. Composition is skewed to low complexity over residues Asp435–Lys445, Asn457–Gln489, Ser959–Lys974, Ile1044–Asn1096, and Asn1262–Gly1301. A Myotubularin phosphatase domain is found at Ile804–Phe1484. LRR repeat units lie at residues Ser1510–Phe1526, Ser1527–Leu1549, Ser1550–Leu1572, Lys1576–Leu1599, Ser1600–Met1622, Gln1624–Cys1645, Val1646–Leu1668, Ser1670–Asp1691, Met1697–Met1720, Ser1722–Asn1743, Leu1744–Leu1770, Val1772–Leu1789, Pro1790–Leu1812, Leu1814–Lys1835, Leu1837–Lys1861, and Leu1863–Leu1887. A compositionally biased stretch (basic and acidic residues) spans Ser1932–Lys1947. Disordered stretches follow at residues Ser1932–Lys1963, Asn2190–Ser2389, Ala2507–Pro2567, and Ser2674–Asn2704. Low complexity-rich tracts occupy residues Asn2190 to Asn2205, Ser2216 to Ser2389, Asn2522 to Pro2567, and Gln2676 to His2688. Positions Glu3008 to Leu3269 constitute a Protein kinase domain. ATP-binding positions include Ile3014 to Val3022 and Lys3035. Asp3132 (proton acceptor) is an active-site residue. Residues Gln3311–Pro3333 are compositionally biased toward low complexity. The disordered stretch occupies residues Gln3311–Asn3365. Positions Asp3354–Asn3365 are enriched in acidic residues.

The protein belongs to the protein kinase superfamily. TKL Ser/Thr protein kinase family. ROCO subfamily.

The enzyme catalyses L-seryl-[protein] + ATP = O-phospho-L-seryl-[protein] + ADP + H(+). The catalysed reaction is L-threonyl-[protein] + ATP = O-phospho-L-threonyl-[protein] + ADP + H(+). The polypeptide is Probable serine/threonine-protein kinase roco9 (roco9) (Dictyostelium discoideum (Social amoeba)).